Here is a 112-residue protein sequence, read N- to C-terminus: Cytochrome c-551 (112 aa).

Residues 1-20 (MKSKLSILMIGFALSVLLAA) form the signal peptide. Cysteine 21 is lipidated: N-palmitoyl cysteine. Residue cysteine 21 is the site of S-diacylglycerol cysteine attachment. The segment covering 25–35 (DAKEEKTDTGS) has biased composition (basic and acidic residues). The tract at residues 25–44 (DAKEEKTDTGSKTEATASEG) is disordered. The Cytochrome c domain occupies 39-112 (ATASEGEELY…VIAKWLSEKK (74 aa)). Positions 52, 55, 56, and 91 each coordinate heme c.

Binds 1 heme c group covalently per subunit.

The protein resides in the cell membrane. Functionally, electron carrier protein. The sequence is that of Cytochrome c-551 (cccB) from Bacillus subtilis (strain 168).